Consider the following 630-residue polypeptide: Elongation factor 4 (630 aa).

The interval 1-22 (MTVARNRAGAGPGKGSPISSFA) is disordered. A tr-type G domain is found at 30-211 (ARIRNFCIIA…EVVRQVPAPV (182 aa)). GTP is bound by residues 42-47 (DHGKST) and 158-161 (NKID).

This sequence belongs to the TRAFAC class translation factor GTPase superfamily. Classic translation factor GTPase family. LepA subfamily.

The protein localises to the cell membrane. It catalyses the reaction GTP + H2O = GDP + phosphate + H(+). Functionally, required for accurate and efficient protein synthesis under certain stress conditions. May act as a fidelity factor of the translation reaction, by catalyzing a one-codon backward translocation of tRNAs on improperly translocated ribosomes. Back-translocation proceeds from a post-translocation (POST) complex to a pre-translocation (PRE) complex, thus giving elongation factor G a second chance to translocate the tRNAs correctly. Binds to ribosomes in a GTP-dependent manner. The chain is Elongation factor 4 from Rhodococcus opacus (strain B4).